A 166-amino-acid polypeptide reads, in one-letter code: Disulfide bond formation protein B (166 aa).

At 1 to 11 the chain is on the cytoplasmic side; the sequence is MIALPRNRRPL. A helical membrane pass occupies residues 12–28; that stretch reads FLAVFAYCAALLAFGLY. Residues 29–46 lie on the Periplasmic side of the membrane; the sequence is LQHYQGIEPCPMCIMQRY. The cysteines at positions 38 and 41 are disulfide-linked. Residues 47-63 traverse the membrane as a helical segment; the sequence is AFALVGVIALVAGLHGP. At 64-70 the chain is on the cytoplasmic side; that stretch reads RGAGVRV. Residues 71 to 87 traverse the membrane as a helical segment; the sequence is YGGLLLLTALAGGSVAA. The Periplasmic portion of the chain corresponds to 88 to 143; sequence RQTWMQLYPPEIPECGPGLEYMLESFPLTSALPMIFRGAGDCSAIDWTFLGLSLAN. Residues C102 and C129 are joined by a disulfide bond. The helical transmembrane segment at 144–162 threads the bilayer; it reads WSLLNFGAAALLALWLLFG. The Cytoplasmic portion of the chain corresponds to 163–166; sequence RRVR.

Belongs to the DsbB family.

It localises to the cell inner membrane. Functionally, required for disulfide bond formation in some periplasmic proteins. Acts by oxidizing the DsbA protein. This is Disulfide bond formation protein B from Azoarcus sp. (strain BH72).